A 206-amino-acid polypeptide reads, in one-letter code: Large ribosomal subunit protein uL4 (206 aa).

Residues 47-79 are disordered; it reads GTKGQKNRSAVRGGGAKPWAQKGSGRARAGTSR. The span at 69–79 shows a compositional bias: low complexity; the sequence is GSGRARAGTSR.

It belongs to the universal ribosomal protein uL4 family. In terms of assembly, part of the 50S ribosomal subunit.

Its function is as follows. One of the primary rRNA binding proteins, this protein initially binds near the 5'-end of the 23S rRNA. It is important during the early stages of 50S assembly. It makes multiple contacts with different domains of the 23S rRNA in the assembled 50S subunit and ribosome. Functionally, forms part of the polypeptide exit tunnel. In Hydrogenovibrio crunogenus (strain DSM 25203 / XCL-2) (Thiomicrospira crunogena), this protein is Large ribosomal subunit protein uL4.